We begin with the raw amino-acid sequence, 229 residues long: Putative N-acetylmannosamine-6-phosphate 2-epimerase (229 aa).

Belongs to the NanE family.

The catalysed reaction is an N-acyl-D-glucosamine 6-phosphate = an N-acyl-D-mannosamine 6-phosphate. It functions in the pathway amino-sugar metabolism; N-acetylneuraminate degradation; D-fructose 6-phosphate from N-acetylneuraminate: step 3/5. Its function is as follows. Converts N-acetylmannosamine-6-phosphate (ManNAc-6-P) to N-acetylglucosamine-6-phosphate (GlcNAc-6-P). The chain is Putative N-acetylmannosamine-6-phosphate 2-epimerase from Cutibacterium acnes (strain DSM 16379 / KPA171202) (Propionibacterium acnes).